The sequence spans 575 residues: MISGILASPGIAFGKALVLKEEKIVLDTQKITDDQIDAEVARFYEGRNAAVEQLNSIRERALISLGEEKAAIFEGHLMILEDEELEEEILDYLRSNKVNAGVAASKILDQQVTMLSEIDDEYLKERAGDIRDIANRLVKNILGMYIVDLGDIQEESILVAYDLTPSETAQLNLEKVLGVVTDIGGRTSHTSIMARSLELPAIVGTNKVTKLVNTGDYLILDAINNQVYINPTASQIDELKALEAKISEEKAELAKLKDLPAITLDGHKVDVVANIGTIRDCDGAERNGAEGIGLYRTEFLFMDREQLPTEEEQFIAYKQVVEAMNGRLTVIRTMDIGGDKELSYLDLPKEMNPFLGWRAIRIALDRREILNAQLRAVLRASAFGKLAVMFPMIISVEEIRELKAVIETLKAELREEGRLFDNNIQVGVMVETPSAAVNAKFLAKEVDFFSIGTNDLTQYTLAVDRGNEFISHLYNPMHPSVLGLIKQVIDASHAEGKWTGMCGELAGDERATLLLLGMGLDEFSMSAISVPRIKKLIRNVNFQDAKVLADTALQKPTAAEIDQLIEEFLLENSLN.

Catalysis depends on His-189, which acts as the Tele-phosphohistidine intermediate. Arg-296 and Arg-332 together coordinate phosphoenolpyruvate. Positions 431 and 455 each coordinate Mg(2+). Phosphoenolpyruvate contacts are provided by residues 454 to 455 (ND) and Arg-465. Catalysis depends on Cys-502, which acts as the Proton donor.

The protein belongs to the PEP-utilizing enzyme family. In terms of assembly, homodimer. Requires Mg(2+) as cofactor.

It localises to the cytoplasm. The catalysed reaction is L-histidyl-[protein] + phosphoenolpyruvate = N(pros)-phospho-L-histidyl-[protein] + pyruvate. Its function is as follows. General (non sugar-specific) component of the phosphoenolpyruvate-dependent sugar phosphotransferase system (sugar PTS). This major carbohydrate active-transport system catalyzes the phosphorylation of incoming sugar substrates concomitantly with their translocation across the cell membrane. Enzyme I transfers the phosphoryl group from phosphoenolpyruvate (PEP) to the phosphoryl carrier protein (HPr). This chain is Phosphoenolpyruvate-protein phosphotransferase (ptsI), found in Haemophilus influenzae (strain ATCC 51907 / DSM 11121 / KW20 / Rd).